The primary structure comprises 101 residues: Small ribosomal subunit protein uS14A (101 aa).

The disordered stretch occupies residues 29–60 (EIIRSPRSTPEQRTAAQNELAHQPRDASAVRV). The segment covering 34 to 45 (PRSTPEQRTAAQ) has biased composition (polar residues).

The protein belongs to the universal ribosomal protein uS14 family. In terms of assembly, part of the 30S ribosomal subunit. Contacts proteins S3 and S10.

Functionally, binds 16S rRNA, required for the assembly of 30S particles and may also be responsible for determining the conformation of the 16S rRNA at the A site. This chain is Small ribosomal subunit protein uS14A, found in Mycolicibacterium paratuberculosis (strain ATCC BAA-968 / K-10) (Mycobacterium paratuberculosis).